A 197-amino-acid chain; its full sequence is Peptidyl-tRNA hydrolase (197 aa).

Tyr23 is a tRNA binding site. The active-site Proton acceptor is the His28. Phe73, Asn75, and Asn121 together coordinate tRNA.

This sequence belongs to the PTH family. As to quaternary structure, monomer.

The protein resides in the cytoplasm. It catalyses the reaction an N-acyl-L-alpha-aminoacyl-tRNA + H2O = an N-acyl-L-amino acid + a tRNA + H(+). In terms of biological role, hydrolyzes ribosome-free peptidyl-tRNAs (with 1 or more amino acids incorporated), which drop off the ribosome during protein synthesis, or as a result of ribosome stalling. Catalyzes the release of premature peptidyl moieties from peptidyl-tRNA molecules trapped in stalled 50S ribosomal subunits, and thus maintains levels of free tRNAs and 50S ribosomes. The polypeptide is Peptidyl-tRNA hydrolase (Frankia casuarinae (strain DSM 45818 / CECT 9043 / HFP020203 / CcI3)).